A 719-amino-acid polypeptide reads, in one-letter code: Probable 1-deoxy-D-xylulose-5-phosphate synthase, chloroplastic (719 aa).

Residues 1-57 constitute a chloroplast transit peptide; the sequence is MALCAYAFPGILNRTVAVASDASKPTPLFSEWIHGTDLQFQFHQKLTQVKKRSRTVQ. Thiamine diphosphate-binding positions include H145 and 186–188; that span reads GHS. Residue D217 participates in Mg(2+) binding. Thiamine diphosphate contacts are provided by residues 218 to 219, N246, Y367, and E449; that span reads GA. A Mg(2+)-binding site is contributed by N246.

This sequence belongs to the transketolase family. DXPS subfamily. As to quaternary structure, homodimer. Mg(2+) is required as a cofactor. Requires thiamine diphosphate as cofactor.

The protein localises to the plastid. The protein resides in the chloroplast. The catalysed reaction is D-glyceraldehyde 3-phosphate + pyruvate + H(+) = 1-deoxy-D-xylulose 5-phosphate + CO2. It functions in the pathway metabolic intermediate biosynthesis; 1-deoxy-D-xylulose 5-phosphate biosynthesis; 1-deoxy-D-xylulose 5-phosphate from D-glyceraldehyde 3-phosphate and pyruvate: step 1/1. Its function is as follows. Catalyzes the acyloin condensation reaction between C atoms 2 and 3 of pyruvate and glyceraldehyde 3-phosphate to yield 1-deoxy-D-xylulose-5-phosphate (DXP). The chain is Probable 1-deoxy-D-xylulose-5-phosphate synthase, chloroplastic (TKT2) from Capsicum annuum (Capsicum pepper).